A 187-amino-acid polypeptide reads, in one-letter code: MESLQNHFLIAMPSLDDTFFERTVIYLCEHDEKGAMGLVINKPLGIEVNSLLEQMDLPAEQVSTDLALGAQVLMGGPVSQDRGFVLHTSQPYWANSTELSSGLMLTTSRDVLTAIGSERSPEKFIVALGYAGWSKNQLEQELADNSWLTIPADQALLFDVKHEDRWQQASRALGFDAWQLSSQAGHA.

It belongs to the UPF0301 (AlgH) family.

This Shewanella sp. (strain MR-7) protein is UPF0301 protein Shewmr7_1270.